Reading from the N-terminus, the 103-residue chain is MALLRGNSLAISQKMLSVFQASALPHISLRIFISPPSIANIWNSILLAVPKKKTSYTKKRSRLLSGKALKDKTVNRCPICGSFKLAHHLCSHCFRNIRREFNE.

Residues 1-47 constitute a mitochondrion transit peptide; the sequence is MALLRGNSLAISQKMLSVFQASALPHISLRIFISPPSIANIWNSILL. Zn(2+) contacts are provided by C77, C80, C90, and C93.

Belongs to the bacterial ribosomal protein bL32 family. Component of the mitochondrial large ribosomal subunit (mt-LSU). Mature yeast 74S mitochondrial ribosomes consist of a small (37S) and a large (54S) subunit. The 37S small subunit contains a 15S ribosomal RNA (15S mt-rRNA) and at least 32 different proteins. The 54S large subunit contains a 21S rRNA (21S mt-rRNA) and at least 45 different proteins. bL32m has a zinc binding site. Post-translationally, MRPL32 precursor is processed by the m-AAA protease, which cleaves the N-terminal transit peptide. Cleavage by the m-AAA protease takes place prior to assembly into the large subunit, an essential step for mitochondrial ribosome (mitoribosome) assembly. Proper processing by the m-AAA protease is dependent on the zinc-binding region within the tightly folded C-terminal domain of MRPL32: zinc-dependent folding halts degradation initiated from the N-terminus and triggers the release of mature mrpl32.

The protein localises to the mitochondrion. In terms of biological role, component of the mitochondrial ribosome (mitoribosome), a dedicated translation machinery responsible for the synthesis of mitochondrial genome-encoded proteins, including at least some of the essential transmembrane subunits of the mitochondrial respiratory chain. The mitoribosomes are attached to the mitochondrial inner membrane and translation products are cotranslationally integrated into the membrane. The polypeptide is Large ribosomal subunit protein bL32m (mrpl32) (Schizosaccharomyces pombe (strain 972 / ATCC 24843) (Fission yeast)).